The sequence spans 171 residues: tRNA-specific adenosine deaminase (171 aa).

The region spanning 6–133 (EEQTYFMQEA…ERLNHRVQVE (128 aa)) is the CMP/dCMP-type deaminase domain. Residue H57 coordinates Zn(2+). The active-site Proton donor is the E59. Zn(2+) is bound by residues C87 and C90.

This sequence belongs to the cytidine and deoxycytidylate deaminase family. Homodimer. Zn(2+) serves as cofactor.

It catalyses the reaction adenosine(34) in tRNA + H2O + H(+) = inosine(34) in tRNA + NH4(+). In terms of biological role, catalyzes the deamination of adenosine to inosine at the wobble position 34 of tRNA(Arg2). This is tRNA-specific adenosine deaminase from Streptococcus pyogenes serotype M3 (strain ATCC BAA-595 / MGAS315).